The following is a 222-amino-acid chain: TPR repeat-containing protein BH2049 (222 aa).

TPR repeat units lie at residues 34–67 and 169–202; these read AEPLFHLGNIHYAYGHKASAMNYWKEAVSKNREH and PVGLKILGISSIRTNQYEAGLTFLEKSLELKEDK.

In Halalkalibacterium halodurans (strain ATCC BAA-125 / DSM 18197 / FERM 7344 / JCM 9153 / C-125) (Bacillus halodurans), this protein is TPR repeat-containing protein BH2049.